Consider the following 576-residue polypeptide: Arginine--tRNA ligase (576 aa).

The 'HIGH' region signature appears at 122 to 132 (PNVAKQMHVGH).

It belongs to the class-I aminoacyl-tRNA synthetase family. Monomer.

The protein resides in the cytoplasm. The catalysed reaction is tRNA(Arg) + L-arginine + ATP = L-arginyl-tRNA(Arg) + AMP + diphosphate. The chain is Arginine--tRNA ligase from Yersinia pseudotuberculosis serotype O:3 (strain YPIII).